We begin with the raw amino-acid sequence, 593 residues long: ABC transporter F family member 2 (593 aa).

Residues 1–10 (MAKKGGKNNK) are compositionally biased toward basic residues. A disordered region spans residues 1 to 25 (MAKKGGKNNKSKKEVTPPTSDVEDE). ABC transporter domains lie at 53–294 (VKIE…VNQM) and 364–583 (MHFD…RDLT). Residues 85 to 92 (GQNGCGKS) and 399 to 406 (GPNGAGKS) each bind ATP.

This sequence belongs to the ABC transporter superfamily. ABCF family. EF3 subfamily.

The protein is ABC transporter F family member 2 (abcF2) of Dictyostelium discoideum (Social amoeba).